A 274-amino-acid chain; its full sequence is WIMGHMVNAIEQVDEFLNLGANAIEFDIDFDKDGIAQITHHGIPCDCGRKCTKKAIFTEYLDNIRQVTTPDDPKFREQLVLLALDLKLRRISSAKAYRAGEDVAKKLLDHYWQRGNSKARAYILLNIPLVEDYEFIRAFKDTLKNEGYESYNDKVGINFTGNEDLDKIRDVLEILGIHKQVWQADGITSCFARGTERLKEALKKRDTPGYNYINKVYAWTLVRKSIMRRSLRLGVDGVMSNNPDRVIKVLKEKEFADKFRLATYNDNPWEKFRG.

Residue histidine 5 is part of the active site. Mg(2+) contacts are provided by glutamate 25 and aspartate 27. The Nucleophile role is filled by histidine 41. Disulfide bonds link cysteine 45/cysteine 51 and cysteine 47/cysteine 190. Aspartate 85 is a Mg(2+) binding site.

The protein belongs to the arthropod phospholipase D family. Class II subfamily. Mg(2+) is required as a cofactor. Expressed by the venom gland.

The protein localises to the secreted. The enzyme catalyses an N-(acyl)-sphingosylphosphocholine = an N-(acyl)-sphingosyl-1,3-cyclic phosphate + choline. The catalysed reaction is an N-(acyl)-sphingosylphosphoethanolamine = an N-(acyl)-sphingosyl-1,3-cyclic phosphate + ethanolamine. It catalyses the reaction a 1-acyl-sn-glycero-3-phosphocholine = a 1-acyl-sn-glycero-2,3-cyclic phosphate + choline. It carries out the reaction a 1-acyl-sn-glycero-3-phosphoethanolamine = a 1-acyl-sn-glycero-2,3-cyclic phosphate + ethanolamine. Dermonecrotic toxins cleave the phosphodiester linkage between the phosphate and headgroup of certain phospholipids (sphingolipid and lysolipid substrates), forming an alcohol (often choline) and a cyclic phosphate. This toxin acts on sphingomyelin (SM). It may also act on ceramide phosphoethanolamine (CPE), lysophosphatidylcholine (LPC) and lysophosphatidylethanolamine (LPE), but not on lysophosphatidylserine (LPS), and lysophosphatidylglycerol (LPG). It acts by transphosphatidylation, releasing exclusively cyclic phosphate products as second products. Induces dermonecrosis, hemolysis, increased vascular permeability, edema, inflammatory response, and platelet aggregation. The chain is Dermonecrotic toxin SdSicTox-betaIIB1aii from Sicarius cf. damarensis (strain GJB-2008) (Six-eyed sand spider).